An 853-amino-acid polypeptide reads, in one-letter code: Dynamin-A (853 aa).

One can recognise a Dynamin-type G domain in the interval P22 to P296. Residues G32 to S39 are G1 motif. Position 32–40 (G32–S40) interacts with GTP. The segment at V58 to R60 is G2 motif. The segment at D138–G141 is G3 motif. Positions T207–D210 are G4 motif. GTP is bound by residues T207–D213 and N238–Q241. The segment at I237–S240 is G5 motif. Low complexity-rich tracts occupy residues D523–Q569 and P590–Q607. Residues D523–G738 are disordered. A compositionally biased stretch (polar residues) spans P610–P624. 2 stretches are compositionally biased toward low complexity: residues N625 to N635 and N664 to N728. Residues T762–N853 enclose the GED domain.

This sequence belongs to the TRAFAC class dynamin-like GTPase superfamily. Dynamin/Fzo/YdjA family.

The protein localises to the cytoplasm. Function in membrane trafficking processes along the endo-lysosomal pathway. This Dictyostelium discoideum (Social amoeba) protein is Dynamin-A (dymA).